A 480-amino-acid chain; its full sequence is Argininosuccinate lyase (480 aa).

Positions 1–20 (MTQQDGGQAGQAEPTKLWGG) are disordered.

The protein belongs to the lyase 1 family. Argininosuccinate lyase subfamily.

It localises to the cytoplasm. The enzyme catalyses 2-(N(omega)-L-arginino)succinate = fumarate + L-arginine. It participates in amino-acid biosynthesis; L-arginine biosynthesis; L-arginine from L-ornithine and carbamoyl phosphate: step 3/3. This is Argininosuccinate lyase from Saccharopolyspora erythraea (strain ATCC 11635 / DSM 40517 / JCM 4748 / NBRC 13426 / NCIMB 8594 / NRRL 2338).